Consider the following 450-residue polypeptide: tRNA modification GTPase MnmE (450 aa).

The (6S)-5-formyl-5,6,7,8-tetrahydrofolate site is built by Arg-24, Glu-82, and Lys-121. One can recognise a TrmE-type G domain in the interval 218-375 (GMHVVLVGQP…LRQVLLEAVG (158 aa)). Position 228 (Asn-228) interacts with K(+). GTP contacts are provided by residues 228–233 (NVGKSS), 247–253 (TDIAGTT), 272–275 (DTAG), and 356–358 (SAR). Ser-232 is a Mg(2+) binding site. 3 residues coordinate K(+): Thr-247, Ile-249, and Thr-252. Thr-253 is a binding site for Mg(2+). Residue Lys-450 coordinates (6S)-5-formyl-5,6,7,8-tetrahydrofolate.

Belongs to the TRAFAC class TrmE-Era-EngA-EngB-Septin-like GTPase superfamily. TrmE GTPase family. Homodimer. Heterotetramer of two MnmE and two MnmG subunits. The cofactor is K(+).

It is found in the cytoplasm. In terms of biological role, exhibits a very high intrinsic GTPase hydrolysis rate. Involved in the addition of a carboxymethylaminomethyl (cmnm) group at the wobble position (U34) of certain tRNAs, forming tRNA-cmnm(5)s(2)U34. This chain is tRNA modification GTPase MnmE, found in Laribacter hongkongensis (strain HLHK9).